A 158-amino-acid chain; its full sequence is MAKKKKQNNPNSIAQNKKARFDYFIEETFEAGLALEGWEVKSLRQGKVQINESYILLKNNEAWLFGALITPLITASTHSNHDPLRLRKLLMHRREIDRLMGLVDQKGFTVVPLGLHWSKGKVKISIGLAKGKKLHDKRATQKERDWNRDKQRIMKYHA.

Belongs to the SmpB family.

The protein resides in the cytoplasm. Functionally, required for rescue of stalled ribosomes mediated by trans-translation. Binds to transfer-messenger RNA (tmRNA), required for stable association of tmRNA with ribosomes. tmRNA and SmpB together mimic tRNA shape, replacing the anticodon stem-loop with SmpB. tmRNA is encoded by the ssrA gene; the 2 termini fold to resemble tRNA(Ala) and it encodes a 'tag peptide', a short internal open reading frame. During trans-translation Ala-aminoacylated tmRNA acts like a tRNA, entering the A-site of stalled ribosomes, displacing the stalled mRNA. The ribosome then switches to translate the ORF on the tmRNA; the nascent peptide is terminated with the 'tag peptide' encoded by the tmRNA and targeted for degradation. The ribosome is freed to recommence translation, which seems to be the essential function of trans-translation. This Hydrogenovibrio crunogenus (strain DSM 25203 / XCL-2) (Thiomicrospira crunogena) protein is SsrA-binding protein.